A 692-amino-acid chain; its full sequence is Acyl-coenzyme A oxidase 2, peroxisomal (692 aa).

Residues 1–49 (MESRREKNPMTEEESDGLIAARRIQRLSLHLSPSLTPSPSLPLVQTETC) constitute a peroxisome transit peptide. FAD-binding residues include T186, S192, G225, R365, Q384, G452, and T473. E475 (proton acceptor) is an active-site residue. Residue D477 participates in FAD binding.

It belongs to the acyl-CoA oxidase family. Homodimer. FAD serves as cofactor. In terms of tissue distribution, expressed mainly in flowers and young seedlings. Lower expression in roots, leaves and bracts.

It localises to the peroxisome. The enzyme catalyses a 2,3-saturated acyl-CoA + O2 = a (2E)-enoyl-CoA + H2O2. Catalyzes the desaturation of long-chain acyl-CoAs to 2-trans-enoyl-CoAs. Active on substrates longer than C14 and mostly with C18-CoA. Activity on long-chain mono-unsaturated substrates is double than with the corresponding saturated substrates. The protein is Acyl-coenzyme A oxidase 2, peroxisomal of Arabidopsis thaliana (Mouse-ear cress).